We begin with the raw amino-acid sequence, 531 residues long: Arginine--tRNA ligase (531 aa).

Residues Ala-113 to His-123 carry the 'HIGH' region motif.

This sequence belongs to the class-I aminoacyl-tRNA synthetase family. In terms of assembly, monomer.

The protein localises to the cytoplasm. It catalyses the reaction tRNA(Arg) + L-arginine + ATP = L-arginyl-tRNA(Arg) + AMP + diphosphate. This is Arginine--tRNA ligase from Campylobacter lari (strain RM2100 / D67 / ATCC BAA-1060).